We begin with the raw amino-acid sequence, 793 residues long: Splicing factor 3A subunit 1 (793 aa).

Residues 1–42 (MPAGPVQAVPPPPPAATEPKQPTEEEASSKEDSTPSKPVVGI) are disordered. K20 is covalently cross-linked (Glycyl lysine isopeptide (Lys-Gly) (interchain with G-Cter in SUMO2)). The span at 21-34 (QPTEEEASSKEDST) shows a compositional bias: basic and acidic residues. An SURP motif 1 repeat occupies 52-94 (IVDKTASFVARNGPEFEARIRQNEINNPKFNFLNPNDPYHAYY). An N6-acetyllysine modification is found at K55. K131 is covalently cross-linked (Glycyl lysine isopeptide (Lys-Gly) (interchain with G-Cter in SUMO2)). The stretch at 166–208 (VVKLTAQFVARNGRQFLTQLMQKEQRNYQFDFLRPQHSLFNYF) is one SURP motif 2 repeat. The tract at residues 318–412 (GESEEVEMEV…PAPAPDEYLV (95 aa)) is disordered. 3 positions are modified to phosphoserine: S320, S329, and S359. Composition is skewed to acidic residues over residues 320–334 (SEEV…EEDE) and 354–364 (DMDEGSDDEEE). A compositionally biased stretch (pro residues) spans 368–384 (VPPPPETPMPPPLPPTP). The span at 388–397 (IVRKDYDPKA) shows a compositional bias: basic and acidic residues. Residue S413 is modified to Phosphoserine. Residue K424 forms a Glycyl lysine isopeptide (Lys-Gly) (interchain with G-Cter in SUMO2) linkage. S451 carries the post-translational modification Phosphoserine. Y456 is subject to Phosphotyrosine. The span at 488-502 (IGEEEIQKPEEKVTW) shows a compositional bias: basic and acidic residues. 3 disordered regions span residues 488-518 (IGEE…AAQA), 530-584 (HKAK…AMPP), and 666-685 (PMPP…SKKL). Residue K499 forms a Glycyl lysine isopeptide (Lys-Gly) (interchain with G-Cter in SUMO2) linkage. S508 bears the Phosphoserine mark. Residues 509-518 (MARTQQAAQA) show a composition bias toward polar residues. K542 is covalently cross-linked (Glycyl lysine isopeptide (Lys-Gly) (interchain with G-Cter in SUMO2)). Residues 563–572 (ATNIPSSAPP) show a composition bias toward polar residues. Positions 666–675 (PMPPVHPPPP) are enriched in pro residues. Positions 680-702 (PASKKLKTEDSLMPEEEFLRRNK) are required and sufficient for nuclear import. K686 participates in a covalent cross-link: Glycyl lysine isopeptide (Lys-Gly) (interchain with G-Cter in SUMO2). One can recognise a Ubiquitin-like domain in the interval 707-793 (IKVQVPNMQD…ALKERGGRKK (87 aa)). A Phosphotyrosine modification is found at Y759.

In terms of assembly, component of the 17S U2 SnRNP complex, a ribonucleoprotein complex that contains small nuclear RNA (snRNA) U2 and a number of specific proteins. Part of the SF3A subcomplex of the 17S U2 SnRNP complex which is composed of three subunits; SF3A3/SAP61, SF3A2/SAP62 and SF3A1/SAP114. SF3A associates with the splicing factor SF3B and a 12S RNA unit to form the mature 17S U2 small nuclear ribonucleoprotein complex (17S U2 snRNP). SF3A1 functions as a scaffold that interacts directly with both SF3A2 and SF3A3. Identified in the spliceosome 'E' complex, a precursor of the spliceosome 'A' complex. Identified in the spliceosome 'A' and 'B' complexes. Identified in the spliceosome 'C' complex. Interacts with P2RX6; resulting in a reduction of the splicing activity.

It is found in the nucleus. The protein resides in the nucleus speckle. Functionally, component of the 17S U2 SnRNP complex of the spliceosome, a large ribonucleoprotein complex that removes introns from transcribed pre-mRNAs. The 17S U2 SnRNP complex (1) directly participates in early spliceosome assembly and (2) mediates recognition of the intron branch site during pre-mRNA splicing by promoting the selection of the pre-mRNA branch-site adenosine, the nucleophile for the first step of splicing. Within the 17S U2 SnRNP complex, SF3A1 is part of the SF3A subcomplex that contributes to the assembly of the 17S U2 snRNP, and the subsequent assembly of the pre-spliceosome 'E' complex and the pre-catalytic spliceosome 'A' complex. Involved in pre-mRNA splicing as a component of pre-catalytic spliceosome 'B' complexes. This chain is Splicing factor 3A subunit 1 (SF3A1), found in Bos taurus (Bovine).